Here is a 202-residue protein sequence, read N- to C-terminus: Na(+)-translocating NADH-quinone reductase subunit E (202 aa).

Helical transmembrane passes span Ala11 to Ile31, Val35 to Ala55, Phe81 to Leu101, Gly114 to Val134, Thr144 to Ile164, and Leu180 to Val200.

This sequence belongs to the NqrDE/RnfAE family. As to quaternary structure, composed of six subunits; NqrA, NqrB, NqrC, NqrD, NqrE and NqrF.

It localises to the cell inner membrane. It carries out the reaction a ubiquinone + n Na(+)(in) + NADH + H(+) = a ubiquinol + n Na(+)(out) + NAD(+). NQR complex catalyzes the reduction of ubiquinone-1 to ubiquinol by two successive reactions, coupled with the transport of Na(+) ions from the cytoplasm to the periplasm. NqrA to NqrE are probably involved in the second step, the conversion of ubisemiquinone to ubiquinol. The polypeptide is Na(+)-translocating NADH-quinone reductase subunit E (Pseudomonas aeruginosa (strain LESB58)).